Here is a 418-residue protein sequence, read N- to C-terminus: MIDLKFLRENPDAVRESQRTRGEDPALVDALLEADASRRAAVLAGDNLRAEQKAFGKKVGQASPEERPALLEGSKELAAKVKQAEAGQHEAQAALDAAHRAISNIVQDGAPAGGEDDFITLETVGEIPAFDFEPKDHLELGESLGLIDMERGAKVSGARFYFLTGFGAMLQLGMLQLAAQKAMANGFQMMIPPVLVRPEIMAGTGFLGAHSDEIYHLADDDLYLVGTSEVPLAGYHSGEILDLADGPKRYAGWSTCFRREAGSYGKDTRGIIRVHQFDKVEMFTYCKPEDADAEHQRLLAWERDMLAAIDVPYRVIDVAGGDLGSSAARKFDCEAWVPTQQAYRELTSTSNCTTFQARRLGVRYRDENGKPQTAATLNGTLATTRWIVAILENHQQSDGTVRVPEALVPFVGTDVLKP.

Position 227–229 (227–229 (TSE)) interacts with L-serine. ATP contacts are provided by residues 258 to 260 (RRE) and valine 274. Glutamate 281 is a binding site for L-serine. 345–348 (ELTS) is a binding site for ATP. Residue threonine 380 participates in L-serine binding.

This sequence belongs to the class-II aminoacyl-tRNA synthetase family. Type-1 seryl-tRNA synthetase subfamily. Homodimer. The tRNA molecule binds across the dimer.

Its subcellular location is the cytoplasm. It catalyses the reaction tRNA(Ser) + L-serine + ATP = L-seryl-tRNA(Ser) + AMP + diphosphate + H(+). It carries out the reaction tRNA(Sec) + L-serine + ATP = L-seryl-tRNA(Sec) + AMP + diphosphate + H(+). The protein operates within aminoacyl-tRNA biosynthesis; selenocysteinyl-tRNA(Sec) biosynthesis; L-seryl-tRNA(Sec) from L-serine and tRNA(Sec): step 1/1. In terms of biological role, catalyzes the attachment of serine to tRNA(Ser). Is also able to aminoacylate tRNA(Sec) with serine, to form the misacylated tRNA L-seryl-tRNA(Sec), which will be further converted into selenocysteinyl-tRNA(Sec). This chain is Serine--tRNA ligase, found in Rhodococcus opacus (strain B4).